The following is a 507-amino-acid chain: ATP synthase subunit alpha, chloroplastic (507 aa).

170 to 177 (GDRQTGKT) contacts ATP.

The protein belongs to the ATPase alpha/beta chains family. In terms of assembly, F-type ATPases have 2 components, CF(1) - the catalytic core - and CF(0) - the membrane proton channel. CF(1) has five subunits: alpha(3), beta(3), gamma(1), delta(1), epsilon(1). CF(0) has four main subunits: a, b, b' and c.

It is found in the plastid. It localises to the chloroplast thylakoid membrane. It catalyses the reaction ATP + H2O + 4 H(+)(in) = ADP + phosphate + 5 H(+)(out). Produces ATP from ADP in the presence of a proton gradient across the membrane. The alpha chain is a regulatory subunit. This Sorghum bicolor (Sorghum) protein is ATP synthase subunit alpha, chloroplastic.